Here is a 129-residue protein sequence, read N- to C-terminus: Histone H2B.2 (129 aa).

Positions 1–19 (MAPKAEKKPASKAPAEKKP) are enriched in basic and acidic residues. Residues 1 to 38 (MAPKAEKKPASKAPAEKKPAAKKTATSGTKKRSKTRKE) are disordered. N6-acetyllysine; alternate is present on residues Lys7 and Lys8. Glycyl lysine isopeptide (Lys-Gly) (interchain with G-Cter in SUMO); alternate cross-links involve residues Lys7 and Lys8. Phosphoserine is present on Ser11. Lys12 carries the post-translational modification N6-acetyllysine. Residue Lys17 is modified to N6-acetyllysine; alternate. Lys17 is covalently cross-linked (Glycyl lysine isopeptide (Lys-Gly) (interchain with G-Cter in SUMO); alternate). Lys18 participates in a covalent cross-link: Glycyl lysine isopeptide (Lys-Gly) (interchain with G-Cter in SUMO). Lys123 is covalently cross-linked (Glycyl lysine isopeptide (Lys-Gly) (interchain with G-Cter in ubiquitin)).

Belongs to the histone H2B family. The nucleosome is a histone octamer containing two molecules each of H2A, H2B, H3 and H4 assembled in one H3-H4 heterotetramer and two H2A-H2B heterodimers. The octamer wraps approximately 147 bp of DNA. Monoubiquitinated by the UBC2-BRE1 complex to form H2BK123ub1. H2BK123ub1 gives a specific tag for epigenetic transcriptional activation and is also prerequisite for H3K4me and H3K79me formation. H2BK123ub1 also modulates the formation of double-strand breaks during meiosis and is a prerequisite for DNA-damage checkpoint activation. In terms of processing, phosphorylated by STE20 to form H2BS10ph during progression through meiotic prophase. May be correlated with chromosome condensation. Post-translationally, acetylated by GCN5 to form H2BK11ac and H2BK16ac. H2BK16ac can also be formed by ESA1. Acetylation of N-terminal lysines and particularly formation of H2BK11acK16ac has a positive effect on transcription. Sumoylation to form H2BK6su or H2BK7su, and probably also H2BK16su or H2BK17su, occurs preferentially near the telomeres and represses gene transcription.

It is found in the nucleus. Its subcellular location is the chromosome. Functionally, core component of nucleosome. Nucleosomes wrap and compact DNA into chromatin, limiting DNA accessibility to the cellular machineries which require DNA as a template. Histones thereby play a central role in transcription regulation, DNA repair, DNA replication and chromosomal stability. DNA accessibility is regulated via a complex set of post-translational modifications of histones, also called histone code, and nucleosome remodeling. This Debaryomyces hansenii (strain ATCC 36239 / CBS 767 / BCRC 21394 / JCM 1990 / NBRC 0083 / IGC 2968) (Yeast) protein is Histone H2B.2 (HTB2).